We begin with the raw amino-acid sequence, 220 residues long: GTP cyclohydrolase 1 (220 aa).

The Zn(2+) site is built by cysteine 109, histidine 112, and cysteine 180.

Belongs to the GTP cyclohydrolase I family. In terms of assembly, toroid-shaped homodecamer, composed of two pentamers of five dimers.

It carries out the reaction GTP + H2O = 7,8-dihydroneopterin 3'-triphosphate + formate + H(+). The protein operates within cofactor biosynthesis; 7,8-dihydroneopterin triphosphate biosynthesis; 7,8-dihydroneopterin triphosphate from GTP: step 1/1. The sequence is that of GTP cyclohydrolase 1 from Yersinia enterocolitica serotype O:8 / biotype 1B (strain NCTC 13174 / 8081).